Here is a 321-residue protein sequence, read N- to C-terminus: Lipoyl synthase (321 aa).

Positions 68, 73, 79, 94, 98, 101, and 308 each coordinate [4Fe-4S] cluster. Residues 80–297 enclose the Radical SAM core domain; that stretch reads FNHGTATFMI…KAEALAMGFT (218 aa).

This sequence belongs to the radical SAM superfamily. Lipoyl synthase family. The cofactor is [4Fe-4S] cluster.

The protein resides in the cytoplasm. It catalyses the reaction [[Fe-S] cluster scaffold protein carrying a second [4Fe-4S](2+) cluster] + N(6)-octanoyl-L-lysyl-[protein] + 2 oxidized [2Fe-2S]-[ferredoxin] + 2 S-adenosyl-L-methionine + 4 H(+) = [[Fe-S] cluster scaffold protein] + N(6)-[(R)-dihydrolipoyl]-L-lysyl-[protein] + 4 Fe(3+) + 2 hydrogen sulfide + 2 5'-deoxyadenosine + 2 L-methionine + 2 reduced [2Fe-2S]-[ferredoxin]. It functions in the pathway protein modification; protein lipoylation via endogenous pathway; protein N(6)-(lipoyl)lysine from octanoyl-[acyl-carrier-protein]: step 2/2. In terms of biological role, catalyzes the radical-mediated insertion of two sulfur atoms into the C-6 and C-8 positions of the octanoyl moiety bound to the lipoyl domains of lipoate-dependent enzymes, thereby converting the octanoylated domains into lipoylated derivatives. The sequence is that of Lipoyl synthase from Salmonella paratyphi A (strain AKU_12601).